Here is a 531-residue protein sequence, read N- to C-terminus: O-phosphoserine--tRNA(Cys) ligase (531 aa).

Substrate is bound by residues 189-191, 234-236, 276-277, and N319; these read HMT, SAS, and YY.

It belongs to the class-II aminoacyl-tRNA synthetase family. O-phosphoseryl-tRNA(Cys) synthetase subfamily. Homotetramer. Interacts with SepCysS.

It carries out the reaction tRNA(Cys) + O-phospho-L-serine + ATP = O-phospho-L-seryl-tRNA(Cys) + AMP + diphosphate. Its function is as follows. Catalyzes the attachment of O-phosphoserine (Sep) to tRNA(Cys). The chain is O-phosphoserine--tRNA(Cys) ligase from Methanospirillum hungatei JF-1 (strain ATCC 27890 / DSM 864 / NBRC 100397 / JF-1).